The sequence spans 234 residues: 1-(5-phosphoribosyl)-5-[(5-phosphoribosylamino)methylideneamino] imidazole-4-carboxamide isomerase (234 aa).

The active-site Proton acceptor is the aspartate 9. Aspartate 131 (proton donor) is an active-site residue.

This sequence belongs to the HisA/HisF family.

It localises to the cytoplasm. It catalyses the reaction 1-(5-phospho-beta-D-ribosyl)-5-[(5-phospho-beta-D-ribosylamino)methylideneamino]imidazole-4-carboxamide = 5-[(5-phospho-1-deoxy-D-ribulos-1-ylimino)methylamino]-1-(5-phospho-beta-D-ribosyl)imidazole-4-carboxamide. The protein operates within amino-acid biosynthesis; L-histidine biosynthesis; L-histidine from 5-phospho-alpha-D-ribose 1-diphosphate: step 4/9. This is 1-(5-phosphoribosyl)-5-[(5-phosphoribosylamino)methylideneamino] imidazole-4-carboxamide isomerase from Staphylococcus aureus (strain NCTC 8325 / PS 47).